The following is a 106-amino-acid chain: Small ribosomal subunit protein uS10 (106 aa).

This sequence belongs to the universal ribosomal protein uS10 family. As to quaternary structure, part of the 30S ribosomal subunit.

Functionally, involved in the binding of tRNA to the ribosomes. The chain is Small ribosomal subunit protein uS10 from Prochlorococcus marinus (strain MIT 9515).